The primary structure comprises 152 residues: 3-hydroxyacyl-[acyl-carrier-protein] dehydratase FabZ (152 aa).

Residue His-57 is part of the active site.

Belongs to the thioester dehydratase family. FabZ subfamily.

It localises to the cytoplasm. The enzyme catalyses a (3R)-hydroxyacyl-[ACP] = a (2E)-enoyl-[ACP] + H2O. Involved in unsaturated fatty acids biosynthesis. Catalyzes the dehydration of short chain beta-hydroxyacyl-ACPs and long chain saturated and unsaturated beta-hydroxyacyl-ACPs. The polypeptide is 3-hydroxyacyl-[acyl-carrier-protein] dehydratase FabZ (Xanthomonas axonopodis pv. citri (strain 306)).